Here is a 149-residue protein sequence, read N- to C-terminus: Large ribosomal subunit protein uL15 (149 aa).

Basic residues-rich tracts occupy residues 1-13 (MPTR…KHRG) and 21-42 (RIGK…HHHR). A disordered region spans residues 1–44 (MPTRLTKTRKHRGNVSAGKGRIGKHRKHPGGRGKAGGQHHHRTN).

This sequence belongs to the universal ribosomal protein uL15 family. In terms of assembly, component of the large ribosomal subunit. Mature ribosomes consist of a small (40S) and a large (60S) subunit. The 40S subunit contains about 32 different proteins and 1 molecule of RNA (18S). The 60S subunit contains 45 different proteins and 3 molecules of RNA (25S, 5.8S and 5S).

The protein resides in the cytoplasm. In terms of biological role, component of the ribosome, a large ribonucleoprotein complex responsible for the synthesis of proteins in the cell. The small ribosomal subunit (SSU) binds messenger RNAs (mRNAs) and translates the encoded message by selecting cognate aminoacyl-transfer RNA (tRNA) molecules. The large subunit (LSU) contains the ribosomal catalytic site termed the peptidyl transferase center (PTC), which catalyzes the formation of peptide bonds, thereby polymerizing the amino acids delivered by tRNAs into a polypeptide chain. The nascent polypeptides leave the ribosome through a tunnel in the LSU and interact with protein factors that function in enzymatic processing, targeting, and the membrane insertion of nascent chains at the exit of the ribosomal tunnel. This is Large ribosomal subunit protein uL15 from Candida albicans (strain SC5314 / ATCC MYA-2876) (Yeast).